We begin with the raw amino-acid sequence, 332 residues long: L-lactate dehydrogenase A chain (332 aa).

Residues glycine 29–lysine 57 and arginine 99 each bind NAD(+). Positions 106, 138, and 169 each coordinate substrate. NAD(+) is bound at residue asparagine 138. Histidine 193 functions as the Proton acceptor in the catalytic mechanism. Threonine 248 contacts substrate.

Belongs to the LDH/MDH superfamily. LDH family. In terms of assembly, homotetramer.

It localises to the cytoplasm. It catalyses the reaction (S)-lactate + NAD(+) = pyruvate + NADH + H(+). It functions in the pathway fermentation; pyruvate fermentation to lactate; (S)-lactate from pyruvate: step 1/1. Its function is as follows. Interconverts simultaneously and stereospecifically pyruvate and lactate with concomitant interconversion of NADH and NAD(+). The polypeptide is L-lactate dehydrogenase A chain (LDHA) (Alligator mississippiensis (American alligator)).